We begin with the raw amino-acid sequence, 1328 residues long: MTVTKTNLNRHLDWFFRESPQKIENVTSPIKTLDFVKVKVSSSDIVVKDSIPHKSKNVFDDFDDGYAIDLTEEHQSSSLNNLKWKDVEGPNILKPIKKIAVPASESEEDFDDVDEEMLRAAEMEVFQSCQPLAVNTADTTVSHSTSSSNVPRSLNKIHDPSRFIKDNDVENRIHVSSASKVASISNTSKPNPIVSENPISATSVSIEIPIKPKELSNNLPFPRLNNNNTNNNNDNNAIEKRDSASPTPSSVSSQISIDFSTWPHQNLLQYLDILRDEKSEISDRIIEVMERYPFSSRFKEWIPKRDILSQKISSVLEVLSNNNNSNNNNGNNGTVPNAKTFFTPPSSITQQVPFPSTIIPESTVKENSTRPYVNSHLVANDKITATPFHSEAVVSPLQSNIRNSDIAEFDEFDIDDADFTFNTTDPINDESGASSDVVVIDDEEDDIENRPLNQALKASKAAVSNASLLQSSSLDRPLLGEMKDKNHKVLMPSLDDPMLSYPWSKEVLGCLKHKFHLKGFRKNQLEAINGTLSGKDVFILMPTGGGKSLCYQLPAVIEGGASRGVTLVISPLLSLMQDQLDHLRKLNIPSLPLSGEQPADERRQVISFLMAKNVLVKLLYVTPEGLASNGAITRVLKSLYERKLLARIVIDEAHCVSHWGHDFRPDYKQLGLLRDRYQGIPFMALTATANEIVKKDIINTLRMENCLELKSSFNRPNLFYEIKPKKDLYTELYRFISNGHLHESGIIYCLSRTSCEQVAAKLRNDYGLKAWHYHAGLEKVERQRIQNEWQSGSYKIIVATIAFGMGVDKGDVRFVIHHSFPKSLEGYYQETGRAGRDGKPAHCIMFYSYKDHVTFQKLIMSGDGDAETKERQRQMLRQVIQFCENKTDCRRKQVLAYFGENFDKVHCRKGCDICCEEATYIKQDMTEFSLQAIKLLKSISGKATLLQLMDIFRGSKSAKIVENGWDRLEGAGVGKLLNRGDSERLFHHLVSEGVFVEKVEANRRGFVSAYVVPGRQTIINSVLAGKRRIILDVKESSSKPDTSSRSLSRSKTLPALREYQLKSTTASVDCSIGTREVDEIYDSQMPPVKPSLIHSRNKIDLEELSGQKFMSEYEIDVMTRCLKDLKLLRSNLMAIDDSRVSSYFTDSVLLSMAKKLPRNVKELKEIHGVSNEKAVNLGPKFLQVIQKFIDEKEQNLEGTELDPSLQSLDTDYPIDTNALSLDHEQGFSDDSDSVYEPSSPIEEGDEEVDGQRKDILNFMNSQSLTQTGSVPKRKSTSYTRPSKSYRHKRGSTSYSRKRKYSTSQKDSRKTSKSANTSFIHPMVKQNYR.

Low complexity-rich tracts occupy residues 217 to 236 (NNLPFPRLNNNNTNNNNDNN) and 244 to 254 (ASPTPSSVSSQ). Positions 217-254 (NNLPFPRLNNNNTNNNNDNNAIEKRDSASPTPSSVSSQ) are disordered. Positions 528-707 (INGTLSGKDV…INTLRMENCL (180 aa)) constitute a Helicase ATP-binding domain. 555–562 (AVIEGGAS) lines the ATP pocket. The DEAH box signature appears at 651–654 (DEAH). The Helicase C-terminal domain maps to 728–876 (LYTELYRFIS…ETKERQRQML (149 aa)). One can recognise an HRDC domain in the interval 1115 to 1195 (IDVMTRCLKD…QKFIDEKEQN (81 aa)). Disordered stretches follow at residues 1224 to 1247 (EQGFSDDSDSVYEPSSPIEEGDEE) and 1260 to 1328 (NSQS…QNYR). A compositionally biased stretch (polar residues) spans 1260 to 1269 (NSQSLTQTGS). A compositionally biased stretch (basic residues) spans 1283–1300 (KSYRHKRGSTSYSRKRKY).

The protein belongs to the helicase family. RecQ subfamily. Interacts with top3.

It localises to the nucleus. The catalysed reaction is Couples ATP hydrolysis with the unwinding of duplex DNA by translocating in the 3'-5' direction.. It catalyses the reaction ATP + H2O = ADP + phosphate + H(+). In terms of biological role, ATP-dependent 3'-5' DNA-helicase. Has a role in the repair of UV-induced DNA damage in G2 via recombination-mediated repair. Also has a role in the repair of infrared-induced double DNA strand breaks. The sequence is that of ATP-dependent DNA helicase hus2/rqh1 from Schizosaccharomyces pombe (strain 972 / ATCC 24843) (Fission yeast).